The sequence spans 329 residues: Quinone-oxidoreductase homolog, chloroplastic (329 aa).

It belongs to the zinc-containing alcohol dehydrogenase family. Quinone oxidoreductase subfamily. The transit peptide is not cleaved.

The protein localises to the plastid. It is found in the chloroplast inner membrane. The polypeptide is Quinone-oxidoreductase homolog, chloroplastic (QOR) (Spinacia oleracea (Spinach)).